The following is a 277-amino-acid chain: Tryptophan synthase alpha chain (277 aa).

Residues glutamate 51 and glutamate 62 each act as proton acceptor in the active site.

This sequence belongs to the TrpA family. In terms of assembly, tetramer of two alpha and two beta chains.

The enzyme catalyses (1S,2R)-1-C-(indol-3-yl)glycerol 3-phosphate + L-serine = D-glyceraldehyde 3-phosphate + L-tryptophan + H2O. Its pathway is amino-acid biosynthesis; L-tryptophan biosynthesis; L-tryptophan from chorismate: step 5/5. The alpha subunit is responsible for the aldol cleavage of indoleglycerol phosphate to indole and glyceraldehyde 3-phosphate. The polypeptide is Tryptophan synthase alpha chain (Phenylobacterium zucineum (strain HLK1)).